The sequence spans 228 residues: 2,3-bisphosphoglycerate-dependent phosphoglycerate mutase (228 aa).

Residues 8–15 (RHGQSAWN), 21–22 (TG), arginine 60, 87–90 (ERHY), lysine 98, 114–115 (RR), and 180–181 (GN) contribute to the substrate site. Histidine 9 functions as the Tele-phosphohistidine intermediate in the catalytic mechanism. Residue glutamate 87 is the Proton donor/acceptor of the active site.

This sequence belongs to the phosphoglycerate mutase family. BPG-dependent PGAM subfamily. Homodimer.

It catalyses the reaction (2R)-2-phosphoglycerate = (2R)-3-phosphoglycerate. The protein operates within carbohydrate degradation; glycolysis; pyruvate from D-glyceraldehyde 3-phosphate: step 3/5. Catalyzes the interconversion of 2-phosphoglycerate and 3-phosphoglycerate. This chain is 2,3-bisphosphoglycerate-dependent phosphoglycerate mutase, found in Rhizorhabdus wittichii (strain DSM 6014 / CCUG 31198 / JCM 15750 / NBRC 105917 / EY 4224 / RW1) (Sphingomonas wittichii).